Consider the following 311-residue polypeptide: L-lactate dehydrogenase (311 aa).

NAD(+)-binding positions include valine 12, aspartate 33, lysine 38, tyrosine 63, and 77-78; that span reads GA. Residues glutamine 80 and arginine 86 each coordinate substrate. NAD(+)-binding positions include serine 99, 116-118, and serine 141; that span reads VTN. 118 to 121 is a binding site for substrate; the sequence is NPVD. 146–149 lines the substrate pocket; that stretch reads DSSR. Beta-D-fructose 1,6-bisphosphate is bound by residues arginine 151 and histidine 166. Catalysis depends on histidine 173, which acts as the Proton acceptor. The residue at position 219 (tyrosine 219) is a Phosphotyrosine. A substrate-binding site is contributed by threonine 228.

It belongs to the LDH/MDH superfamily. LDH family. As to quaternary structure, homotetramer.

The protein resides in the cytoplasm. The enzyme catalyses (S)-lactate + NAD(+) = pyruvate + NADH + H(+). It functions in the pathway fermentation; pyruvate fermentation to lactate; (S)-lactate from pyruvate: step 1/1. With respect to regulation, allosterically activated by fructose 1,6-bisphosphate (FBP). Catalyzes the conversion of lactate to pyruvate. This chain is L-lactate dehydrogenase, found in Thermoanaerobacterium saccharolyticum (strain DSM 8691 / JW/SL-YS485).